The following is a 350-amino-acid chain: Small ribosomal subunit biogenesis GTPase RsgA (350 aa).

Residues 1–17 (MSKNKLSKGQQRRVQAN) are compositionally biased toward polar residues. Residues 1–35 (MSKNKLSKGQQRRVQANHQRRLRTDRKPELDDSQL) are disordered. Positions 103 to 273 (TSVLTRPDLY…VIDSPGVREF (171 aa)) constitute a CP-type G domain. Residues 159–162 (NKID) and 213–221 (GQSGVGKSS) each bind GTP. Residues C297, C302, H304, and C310 each contribute to the Zn(2+) site.

It belongs to the TRAFAC class YlqF/YawG GTPase family. RsgA subfamily. As to quaternary structure, monomer. Associates with 30S ribosomal subunit, binds 16S rRNA. Zn(2+) serves as cofactor.

It is found in the cytoplasm. Functionally, one of several proteins that assist in the late maturation steps of the functional core of the 30S ribosomal subunit. Helps release RbfA from mature subunits. May play a role in the assembly of ribosomal proteins into the subunit. Circularly permuted GTPase that catalyzes slow GTP hydrolysis, GTPase activity is stimulated by the 30S ribosomal subunit. The polypeptide is Small ribosomal subunit biogenesis GTPase RsgA (Yersinia pseudotuberculosis serotype O:1b (strain IP 31758)).